Reading from the N-terminus, the 260-residue chain is UPF0246 protein Bmul_1054/BMULJ_02209 (260 aa).

Belongs to the UPF0246 family.

In Burkholderia multivorans (strain ATCC 17616 / 249), this protein is UPF0246 protein Bmul_1054/BMULJ_02209.